The primary structure comprises 381 residues: Cytochrome b (381 aa).

The next 4 helical transmembrane spans lie at 34–54 (FGSLLGLCLIMQIITGLFLAM), 78–99 (WLMRNIHAYGASFFFICIYLHI), 114–134 (WNIGVVLLFLLMATAFVGYVL), and 179–199 (FFAFHFLLPFLILALSVIHIL). 2 residues coordinate heme b: His84 and His98. The heme b site is built by His183 and His197. His202 serves as a coordination point for a ubiquinone. A run of 4 helical transmembrane segments spans residues 227 to 247 (YKDLFGFLIVITLLATLALFM), 289 to 309 (LGGVLALLFSIFILLLVPLLH), 321 to 341 (LTQIFFWSLVTNAIILTWIGG), and 348 to 368 (FIMVGQIASVAYFSLFLFVIP).

It belongs to the cytochrome b family. In terms of assembly, the cytochrome bc1 complex contains 3 respiratory subunits (MT-CYB, CYC1 and UQCRFS1), 2 core proteins (UQCRC1 and UQCRC2) and probably 6 low-molecular weight proteins. Requires heme b as cofactor.

The protein localises to the mitochondrion inner membrane. In terms of biological role, component of the ubiquinol-cytochrome c reductase complex (complex III or cytochrome b-c1 complex) that is part of the mitochondrial respiratory chain. The b-c1 complex mediates electron transfer from ubiquinol to cytochrome c. Contributes to the generation of a proton gradient across the mitochondrial membrane that is then used for ATP synthesis. The sequence is that of Cytochrome b (mt-cyb) from Scyliorhinus canicula (Small-spotted catshark).